The chain runs to 89 residues: Small ribosomal subunit protein uS15 (89 aa).

The protein belongs to the universal ribosomal protein uS15 family. In terms of assembly, part of the 30S ribosomal subunit. Forms a bridge to the 50S subunit in the 70S ribosome, contacting the 23S rRNA.

In terms of biological role, one of the primary rRNA binding proteins, it binds directly to 16S rRNA where it helps nucleate assembly of the platform of the 30S subunit by binding and bridging several RNA helices of the 16S rRNA. Forms an intersubunit bridge (bridge B4) with the 23S rRNA of the 50S subunit in the ribosome. This is Small ribosomal subunit protein uS15 from Dechloromonas aromatica (strain RCB).